The primary structure comprises 189 residues: UPF0301 protein A1E_00140 (189 aa).

Belongs to the UPF0301 (AlgH) family.

This chain is UPF0301 protein A1E_00140, found in Rickettsia canadensis (strain McKiel).